Here is a 320-residue protein sequence, read N- to C-terminus: Malate dehydrogenase (320 aa).

Residues 10 to 15 (GAGQIG) and Asp-34 contribute to the NAD(+) site. Substrate-binding residues include Arg-83 and Arg-89. Residues Asn-96 and 119–121 (ITN) contribute to the NAD(+) site. Residues Asn-121 and Arg-152 each contribute to the substrate site. His-176 acts as the Proton acceptor in catalysis.

Belongs to the LDH/MDH superfamily. MDH type 3 family.

It catalyses the reaction (S)-malate + NAD(+) = oxaloacetate + NADH + H(+). In terms of biological role, catalyzes the reversible oxidation of malate to oxaloacetate. This chain is Malate dehydrogenase, found in Ruegeria pomeroyi (strain ATCC 700808 / DSM 15171 / DSS-3) (Silicibacter pomeroyi).